The chain runs to 728 residues: Microtubule-associated protein VP5 (728 aa).

It belongs to the reoviridae microtubule-associated protein family.

The protein resides in the virion. Its subcellular location is the host cytoplasm. It localises to the host cytoskeleton. In terms of biological role, minor inner capsid component. Displays NTPase and RNA 5'-triphosphatase (RTPase) activities. May function as a cofactor of polymerase. Associates with microtubules and plays a role in the formation, structural organization and morphology of viral inclusions, where the assembly of cores and the replication of viral RNA occur. This chain is Microtubule-associated protein VP5 (S5), found in Ctenopharyngodon idella (Grass carp).